The primary structure comprises 594 residues: Probable pectinesterase/pectinesterase inhibitor 33 (594 aa).

Positions 1-22 are cleaved as a signal peptide; that stretch reads MLRGIFHICLLASFLLLPFSSA. The interval 28 to 75 is disordered; sequence FTGGTDAPPPWDHNVSPPPETAPSPTPTSSPSTTSPPSPGPVAAPSPI. Residues 34 to 71 are compositionally biased toward pro residues; that stretch reads APPPWDHNVSPPPETAPSPTPTSSPSTTSPPSPGPVAA. Residues Asn-77, Asn-170, Asn-213, and Asn-226 are each glycosylated (N-linked (GlcNAc...) asparagine). Positions 78–237 are pectinesterase inhibitor 33; it reads GSVSGDMTWW…SDLIGNCLAV (160 aa). A pectinesterase 33 region spans residues 280–581; it reads HLVVAQDRSG…TVGSLIAGGS (302 aa). Substrate is bound by residues Thr-356 and Gln-386. Catalysis depends on Asp-409, which acts as the Proton donor; for pectinesterase activity. Residues Cys-423 and Cys-443 are joined by a disulfide bond. Asp-430 functions as the Nucleophile; for pectinesterase activity in the catalytic mechanism. Positions 498 and 500 each coordinate substrate.

This sequence in the N-terminal section; belongs to the PMEI family. The protein in the C-terminal section; belongs to the pectinesterase family. As to expression, expressed in siliques.

Its subcellular location is the secreted. It localises to the cell wall. The catalysed reaction is [(1-&gt;4)-alpha-D-galacturonosyl methyl ester](n) + n H2O = [(1-&gt;4)-alpha-D-galacturonosyl](n) + n methanol + n H(+). Its pathway is glycan metabolism; pectin degradation; 2-dehydro-3-deoxy-D-gluconate from pectin: step 1/5. Acts in the modification of cell walls via demethylesterification of cell wall pectin. This Arabidopsis thaliana (Mouse-ear cress) protein is Probable pectinesterase/pectinesterase inhibitor 33 (PME33).